A 246-amino-acid chain; its full sequence is TLC domain-containing protein 2 (246 aa).

The next 6 membrane-spanning stretches (helical) occupy residues 5 to 25 (SVILTTGSSVGFFKLVNYGLG), 43 to 63 (ISTSFVHSLITGVWSVLCFCM), 79 to 99 (SHALVSVSIGYFIYDFLDMVI), 107 to 127 (WELLFHHVVVITCFGISVLTC), 128 to 148 (RYVGFAVVALLVEINSVFLHL), and 199 to 219 (FSYTIGSVGLAIMTAMNIVLF). The TLC domain maps to 35–231 (RNAWKWNNIS…LMRSDFMKAS (197 aa)).

The protein belongs to the TLCD family.

The protein resides in the cell membrane. Functionally, regulates the composition and fluidity of the plasma membrane. Inhibits the incorporation of membrane-fluidizing phospholipids containing omega-3 long-chain polyunsaturated fatty acids (LCPUFA) and thereby promotes membrane rigidity. Does not appear to have any effect on LCPUFA synthesis. The protein is TLC domain-containing protein 2 (tlcd2) of Danio rerio (Zebrafish).